The sequence spans 522 residues: Gypsy retrotransposon integrase-like protein 1 (522 aa).

The Integrase catalytic domain maps to 135-292; it reads KVENPWSLVT…TPYFQMFSRN (158 aa).

The polypeptide is Gypsy retrotransposon integrase-like protein 1 (GIN1) (Macaca fascicularis (Crab-eating macaque)).